We begin with the raw amino-acid sequence, 767 residues long: Granule-bound starch synthase 2, chloroplastic/amyloplastic (767 aa).

Residues 1–45 (MENSILLHSGNQFHPNLPLLALRPKKLSLIHGSSREQMWRIKRVK) constitute a chloroplast transit peptide. 2 disordered regions span residues 160-204 (KRDL…SSQE) and 226-268 (YMPS…EKPP). Low complexity predominate over residues 172-188 (SRSSITASSQISSTVSS). Residues 230–245 (LRKESSASHVEQRNEN) are compositionally biased toward basic and acidic residues. Over residues 253 to 262 (ANEETEDPVN) the composition is skewed to acidic residues. An ADP-alpha-D-glucose-binding site is contributed by K290.

This sequence belongs to the glycosyltransferase 1 family. Bacterial/plant glycogen synthase subfamily.

It localises to the plastid. Its subcellular location is the chloroplast. The protein localises to the amyloplast. The catalysed reaction is [(1-&gt;4)-alpha-D-glucosyl](n) + ADP-alpha-D-glucose = [(1-&gt;4)-alpha-D-glucosyl](n+1) + ADP + H(+). It participates in glycan biosynthesis; starch biosynthesis. Its function is as follows. Accounts for only 10 to 15% of the total soluble starch synthase activity in tubers. This chain is Granule-bound starch synthase 2, chloroplastic/amyloplastic (SS2), found in Solanum tuberosum (Potato).